The chain runs to 466 residues: Asparagine--tRNA ligase (466 aa).

It belongs to the class-II aminoacyl-tRNA synthetase family. In terms of assembly, homodimer.

It is found in the cytoplasm. The enzyme catalyses tRNA(Asn) + L-asparagine + ATP = L-asparaginyl-tRNA(Asn) + AMP + diphosphate + H(+). The protein is Asparagine--tRNA ligase of Shewanella baltica (strain OS155 / ATCC BAA-1091).